Here is a 144-residue protein sequence, read N- to C-terminus: Cysteine-rich tail protein 1 (144 aa).

Residues 51–105 (APEPTHLLQPTEVPGPKGAKGNQGAAPIQNQQAWQQPGNPYSSSQRQAGLTYAGP) form a disordered region. A compositionally biased stretch (polar residues) spans 78–98 (IQNQQAWQQPGNPYSSSQRQA).

The protein belongs to the CYSRT1 family. In terms of assembly, interacts with LCE1B; the interaction is direct. Interacts with LCE2C; the interaction is direct. Interacts with LCE3A; the interaction is direct. Interacts with LCE3C; the interaction is direct. Interacts with LCE4A; the interaction is direct. Interacts with LCE5A; the interaction is direct. Interacts with LCE1C. Interacts with LCE1D. Interacts with LCE1E. Interacts with LCE2A. Interacts with LCE3D. Interacts with LCE3E. Interacts with LCE1A. As to expression, expressed in the stratum granulosum, in skin and oral epithelia (at protein level).

It localises to the cornified envelope. Functionally, component of the stratum corneum that may contribute to epidermal antimicrobial host defenses. This chain is Cysteine-rich tail protein 1 (CYSRT1), found in Homo sapiens (Human).